A 367-amino-acid polypeptide reads, in one-letter code: Protein-glutamate methylesterase/protein-glutamine glutaminase 2 (367 aa).

Residues 15-132 form the Response regulatory domain; the sequence is RALIVDDSAL…SQSMHEMAEE (118 aa). Aspartate 66 is modified (4-aspartylphosphate). Positions 172 to 367 constitute a CheB-type methylesterase domain; the sequence is KTSVRNVLAI…MADEIVKIVR (196 aa). Residues serine 184, histidine 211, and aspartate 311 contribute to the active site.

The protein belongs to the CheB family. Post-translationally, phosphorylated by CheA. Phosphorylation of the N-terminal regulatory domain activates the methylesterase activity.

Its subcellular location is the cytoplasm. The catalysed reaction is [protein]-L-glutamate 5-O-methyl ester + H2O = L-glutamyl-[protein] + methanol + H(+). It catalyses the reaction L-glutaminyl-[protein] + H2O = L-glutamyl-[protein] + NH4(+). In terms of biological role, involved in chemotaxis. Part of a chemotaxis signal transduction system that modulates chemotaxis in response to various stimuli. Catalyzes the demethylation of specific methylglutamate residues introduced into the chemoreceptors (methyl-accepting chemotaxis proteins or MCP) by CheR. Also mediates the irreversible deamidation of specific glutamine residues to glutamic acid. This chain is Protein-glutamate methylesterase/protein-glutamine glutaminase 2, found in Methanosarcina mazei (strain ATCC BAA-159 / DSM 3647 / Goe1 / Go1 / JCM 11833 / OCM 88) (Methanosarcina frisia).